The sequence spans 401 residues: Acetate kinase (401 aa).

Asn7 serves as a coordination point for Mg(2+). An ATP-binding site is contributed by Lys14. Arg96 provides a ligand contact to substrate. The active-site Proton donor/acceptor is Asp153. ATP contacts are provided by residues 212-216 (HLGNG), 287-289 (DMR), and 335-339 (GIGEN). Glu388 is a Mg(2+) binding site.

This sequence belongs to the acetokinase family. As to quaternary structure, homodimer. The cofactor is Mg(2+). Requires Mn(2+) as cofactor.

It is found in the cytoplasm. The catalysed reaction is acetate + ATP = acetyl phosphate + ADP. It functions in the pathway metabolic intermediate biosynthesis; acetyl-CoA biosynthesis; acetyl-CoA from acetate: step 1/2. Catalyzes the formation of acetyl phosphate from acetate and ATP. Can also catalyze the reverse reaction. In Microcystis aeruginosa (strain NIES-843 / IAM M-2473), this protein is Acetate kinase.